Here is a 226-residue protein sequence, read N- to C-terminus: Calcium-binding protein 1 (226 aa).

Gly2 carries the N-myristoyl glycine lipid modification. Residue Cys4 is the site of S-palmitoyl cysteine attachment. 4 consecutive EF-hand domains span residues Glu81 to Met116, Gly135 to Ala152, Ile158 to His193, and Val195 to Arg226. Residues Asp94, Asp96, Asp98, Tyr100, and Asp105 each coordinate Ca(2+). Ca(2+) is bound by residues Asp171, Asn173, Asp175, and Glu177. A Phosphoserine modification is found at Ser179. Residues Glu182, Asp208, Asn210, Asp212, Arg214, and Glu219 each coordinate Ca(2+).

As to quaternary structure, homodimer. Interacts (via C-terminus) with ITPR1, ITPR2 and ITPR3. This binding is calcium dependent and the interaction correlates with calcium concentration. An additional calcium-independent interaction with the N-terminus of ITPR1 results in a decreased InsP(3) binding to the receptor. Interacts with CACNA1A (via C-terminal CDB motif) in the pre- and postsynaptic membranes. Interacts with CACNA1C (via C-terminal C and IQ motifs). Interacts with CACNA1D. The binding to the C motif is calcium independent whereas the binding to IQ requires the presence of calcium and is mutually exclusive with calmodulin binding. Interacts with TRPC5 (via C-terminus). Interacts (via EF-hands 1 and 2) at microtubules with MAP1LC3B. Interacts with MYO1C. Interacts (via EF-hands 1 and 2) with NSMF (via the central NLS-containing motif region), the interaction occurs in a calcium dependent manner after synaptic NMDA receptor stimulation and prevents nuclear import of NSMF. Interacts with SPACA9. In terms of processing, phosphorylated. The phosphorylation regulates the activity.

It is found in the cytoplasm. It localises to the cytoskeleton. The protein localises to the perinuclear region. The protein resides in the cell membrane. Its subcellular location is the golgi apparatus. It is found in the postsynaptic density. Modulates calcium-dependent activity of inositol 1,4,5-triphosphate receptors (ITPRs). Inhibits agonist-induced intracellular calcium signaling. Enhances inactivation and does not support calcium-dependent facilitation of voltage-dependent P/Q-type calcium channels. Causes calcium-dependent facilitation and inhibits inactivation of L-type calcium channels by binding to the same sites as calmodulin in the C-terminal domain of CACNA1C, but has an opposite effect on channel function. Suppresses the calcium-dependent inactivation of CACNA1D. Inhibits TRPC5 channels. Prevents NMDA receptor-induced cellular degeneration. Required for the normal transfer of light signals through the retina. The protein is Calcium-binding protein 1 (CABP1) of Bos taurus (Bovine).